We begin with the raw amino-acid sequence, 325 residues long: Tagatose 1,6-diphosphate aldolase (325 aa).

The protein belongs to the aldolase LacD family.

It catalyses the reaction D-tagatofuranose 1,6-bisphosphate = D-glyceraldehyde 3-phosphate + dihydroxyacetone phosphate. The protein operates within carbohydrate metabolism; D-tagatose 6-phosphate degradation; D-glyceraldehyde 3-phosphate and glycerone phosphate from D-tagatose 6-phosphate: step 2/2. The chain is Tagatose 1,6-diphosphate aldolase from Staphylococcus haemolyticus (strain JCSC1435).